A 272-amino-acid chain; its full sequence is HMP-PP phosphatase (272 aa).

The active-site Nucleophile is aspartate 8. Residues aspartate 8, aspartate 10, and aspartate 212 each contribute to the Mg(2+) site.

It belongs to the HAD-like hydrolase superfamily. Cof family. Mg(2+) serves as cofactor.

The catalysed reaction is 4-amino-2-methyl-5-(diphosphooxymethyl)pyrimidine + H2O = 4-amino-2-methyl-5-(phosphooxymethyl)pyrimidine + phosphate + H(+). Catalyzes the hydrolysis of 4-amino-2-methyl-5-hydroxymethylpyrimidine pyrophosphate (HMP-PP) to 4-amino-2-methyl-5-hydroxymethylpyrimidine phosphate (HMP-P). The polypeptide is HMP-PP phosphatase (Salmonella newport (strain SL254)).